Here is a 491-residue protein sequence, read N- to C-terminus: Iota-carrageenase (491 aa).

The first 23 residues, 1 to 23 (MRLYFRKLWLTNLFLGGALASSA), serve as a signal peptide directing secretion. Cystine bridges form between cysteine 269-cysteine 298, cysteine 336-cysteine 360, cysteine 408-cysteine 476, and cysteine 412-cysteine 484.

It belongs to the glycosyl hydrolase 82 family.

Its subcellular location is the secreted. The catalysed reaction is Endohydrolysis of 1,4-beta-D-linkages between D-galactose 4-sulfate and 3,6-anhydro-D-galactose-2-sulfate in iota-carrageenans.. Its function is as follows. Hydrolyzes iota-carrageenans, sulfated 1,3-alpha-1,4-beta galactans from red algal cell walls, with an inversion of anomeric configuration. Also active against hybrid iota-/nu-carrageenan, not active against kappa- or lambda-carrageenans. The chain is Iota-carrageenase from Alteromonas macleodii (Pseudoalteromonas macleodii).